The chain runs to 471 residues: Bifunctional protein GlmU (471 aa).

A pyrophosphorylase region spans residues 1 to 235; the sequence is MVAVAILAAG…YQEIFGINNR (235 aa). UDP-N-acetyl-alpha-D-glucosamine-binding positions include 7–10, Lys21, Gln82, and 87–88; these read LAAG and GT. Position 112 (Asp112) interacts with Mg(2+). UDP-N-acetyl-alpha-D-glucosamine contacts are provided by Gly149, Glu164, Asn179, and Asn233. Asn233 is a Mg(2+) binding site. A linker region spans residues 236–256; it reads KHLAKAHEILQVRVKDDWMEA. The segment at 257-471 is N-acetyltransferase; sequence GVTLIDPDSI…SKKEENKSSP (215 aa). UDP-N-acetyl-alpha-D-glucosamine is bound by residues Arg338 and Lys356. Residue His368 is the Proton acceptor of the active site. The UDP-N-acetyl-alpha-D-glucosamine site is built by Tyr371 and Asn382. Residues Ala385, 391–392, Ser410, Ala428, and Arg445 contribute to the acetyl-CoA site; that span reads NY.

This sequence in the N-terminal section; belongs to the N-acetylglucosamine-1-phosphate uridyltransferase family. The protein in the C-terminal section; belongs to the transferase hexapeptide repeat family. In terms of assembly, homotrimer. It depends on Mg(2+) as a cofactor.

The protein resides in the cytoplasm. The enzyme catalyses alpha-D-glucosamine 1-phosphate + acetyl-CoA = N-acetyl-alpha-D-glucosamine 1-phosphate + CoA + H(+). It catalyses the reaction N-acetyl-alpha-D-glucosamine 1-phosphate + UTP + H(+) = UDP-N-acetyl-alpha-D-glucosamine + diphosphate. It participates in nucleotide-sugar biosynthesis; UDP-N-acetyl-alpha-D-glucosamine biosynthesis; N-acetyl-alpha-D-glucosamine 1-phosphate from alpha-D-glucosamine 6-phosphate (route II): step 2/2. The protein operates within nucleotide-sugar biosynthesis; UDP-N-acetyl-alpha-D-glucosamine biosynthesis; UDP-N-acetyl-alpha-D-glucosamine from N-acetyl-alpha-D-glucosamine 1-phosphate: step 1/1. It functions in the pathway bacterial outer membrane biogenesis; LPS lipid A biosynthesis. Functionally, catalyzes the last two sequential reactions in the de novo biosynthetic pathway for UDP-N-acetylglucosamine (UDP-GlcNAc). The C-terminal domain catalyzes the transfer of acetyl group from acetyl coenzyme A to glucosamine-1-phosphate (GlcN-1-P) to produce N-acetylglucosamine-1-phosphate (GlcNAc-1-P), which is converted into UDP-GlcNAc by the transfer of uridine 5-monophosphate (from uridine 5-triphosphate), a reaction catalyzed by the N-terminal domain. This chain is Bifunctional protein GlmU, found in Trichodesmium erythraeum (strain IMS101).